The following is a 314-amino-acid chain: Small ribosomal subunit protein uS11m (314 aa).

A mitochondrion-targeting transit peptide spans M1 to S37. Residues D34–S138 are disordered. A compositionally biased stretch (polar residues) spans E50–I63. Low complexity predominate over residues S103–P114.

Belongs to the universal ribosomal protein uS11 family. Component of the mitochondrial ribosome small subunit (28S) which comprises a 12S rRNA and about 30 distinct proteins.

It is found in the mitochondrion. Required for karyogamy during female gametophyte development, when the two polar nuclei fuse to form the diploid central cell nucleus. The polypeptide is Small ribosomal subunit protein uS11m (Arabidopsis thaliana (Mouse-ear cress)).